The primary structure comprises 221 residues: UPF0758 protein YicR (221 aa).

The region spanning 99–221 is the MPN domain; it reads ALLSPEMTRE…YVSFAERGWI (123 aa). The Zn(2+) site is built by H170, H172, and D183. The JAMM motif motif lies at 170–183; the sequence is HNHPSGCAEPSKAD.

Belongs to the UPF0758 family. YicR subfamily.

This Salmonella newport (strain SL254) protein is UPF0758 protein YicR.